The following is a 268-amino-acid chain: Tryptophan synthase alpha chain (268 aa).

Residues glutamate 49 and aspartate 60 each act as proton acceptor in the active site.

It belongs to the TrpA family. As to quaternary structure, tetramer of two alpha and two beta chains.

The catalysed reaction is (1S,2R)-1-C-(indol-3-yl)glycerol 3-phosphate + L-serine = D-glyceraldehyde 3-phosphate + L-tryptophan + H2O. It functions in the pathway amino-acid biosynthesis; L-tryptophan biosynthesis; L-tryptophan from chorismate: step 5/5. In terms of biological role, the alpha subunit is responsible for the aldol cleavage of indoleglycerol phosphate to indole and glyceraldehyde 3-phosphate. This chain is Tryptophan synthase alpha chain, found in Escherichia coli O81 (strain ED1a).